The chain runs to 102 residues: Serum amyloid A-5 protein (102 aa).

Residues 68 to 102 (GRGHEDSMADQEANRWGRSGNDPNHYRPAGLPDKY) form a disordered region. Basic and acidic residues predominate over residues 69 to 82 (RGHEDSMADQEANR).

Belongs to the SAA family. Expressed by the liver; secreted in plasma.

Its subcellular location is the secreted. Functionally, major acute phase reactant. Apolipoprotein of the HDL complex. The sequence is that of Serum amyloid A-5 protein from Mesocricetus auratus (Golden hamster).